The sequence spans 142 residues: MKTFTAKPETVKRDWYVVDADGKTLGRLATEVARRLRGKHKAEYTPHVDTGDYIIIVNAEKVAVTGNKRSDKIYYHHTGHIGGIKQATFEEMIARRPERVIEIAVKGMLPKGPLGRAMYRKLKVYAGSEHNHAAQQPQVLDI.

The protein belongs to the universal ribosomal protein uL13 family. Part of the 50S ribosomal subunit.

Functionally, this protein is one of the early assembly proteins of the 50S ribosomal subunit, although it is not seen to bind rRNA by itself. It is important during the early stages of 50S assembly. This is Large ribosomal subunit protein uL13 from Photorhabdus laumondii subsp. laumondii (strain DSM 15139 / CIP 105565 / TT01) (Photorhabdus luminescens subsp. laumondii).